Reading from the N-terminus, the 652-residue chain is Phosphomethylpyrimidine synthase (652 aa).

Residues asparagine 235, methionine 264, tyrosine 293, histidine 329, 349–351, 390–393, and glutamate 429 contribute to the substrate site; these read SRG and DGMR. Histidine 433 is a Zn(2+) binding site. Tyrosine 456 lines the substrate pocket. Histidine 497 is a binding site for Zn(2+). Residues cysteine 577, cysteine 580, and cysteine 585 each coordinate [4Fe-4S] cluster.

This sequence belongs to the ThiC family. In terms of assembly, homodimer. The cofactor is [4Fe-4S] cluster.

It carries out the reaction 5-amino-1-(5-phospho-beta-D-ribosyl)imidazole + S-adenosyl-L-methionine = 4-amino-2-methyl-5-(phosphooxymethyl)pyrimidine + CO + 5'-deoxyadenosine + formate + L-methionine + 3 H(+). Its pathway is cofactor biosynthesis; thiamine diphosphate biosynthesis. Functionally, catalyzes the synthesis of the hydroxymethylpyrimidine phosphate (HMP-P) moiety of thiamine from aminoimidazole ribotide (AIR) in a radical S-adenosyl-L-methionine (SAM)-dependent reaction. This chain is Phosphomethylpyrimidine synthase, found in Shewanella sediminis (strain HAW-EB3).